The chain runs to 132 residues: Small ribosomal subunit protein uS8c (132 aa).

This sequence belongs to the universal ribosomal protein uS8 family. As to quaternary structure, part of the 30S ribosomal subunit.

The protein resides in the plastid. It localises to the chloroplast. Its function is as follows. One of the primary rRNA binding proteins, it binds directly to 16S rRNA central domain where it helps coordinate assembly of the platform of the 30S subunit. This is Small ribosomal subunit protein uS8c (rps8) from Rhodomonas salina (Cryptomonas salina).